The primary structure comprises 510 residues: GMP synthase [glutamine-hydrolyzing] (510 aa).

The Glutamine amidotransferase type-1 domain occupies 5-195 (LVLVIDFGGQ…LFKICGLKED (191 aa)). C82 functions as the Nucleophile in the catalytic mechanism. Active-site residues include H169 and E171. Residues 196 to 385 (WSMSSFAKEK…LGIPHKLVWR (190 aa)) enclose the GMPS ATP-PPase domain. 223–229 (SGGVDSS) serves as a coordination point for ATP.

In terms of assembly, homodimer.

The catalysed reaction is XMP + L-glutamine + ATP + H2O = GMP + L-glutamate + AMP + diphosphate + 2 H(+). Its pathway is purine metabolism; GMP biosynthesis; GMP from XMP (L-Gln route): step 1/1. Catalyzes the synthesis of GMP from XMP. The chain is GMP synthase [glutamine-hydrolyzing] from Clostridium acetobutylicum (strain ATCC 824 / DSM 792 / JCM 1419 / IAM 19013 / LMG 5710 / NBRC 13948 / NRRL B-527 / VKM B-1787 / 2291 / W).